The primary structure comprises 111 residues: Large ribosomal subunit protein uL23 (111 aa).

It belongs to the universal ribosomal protein uL23 family. Part of the 50S ribosomal subunit. Contacts protein L29, and trigger factor when it is bound to the ribosome.

One of the early assembly proteins it binds 23S rRNA. One of the proteins that surrounds the polypeptide exit tunnel on the outside of the ribosome. Forms the main docking site for trigger factor binding to the ribosome. The protein is Large ribosomal subunit protein uL23 of Chlamydia caviae (strain ATCC VR-813 / DSM 19441 / 03DC25 / GPIC) (Chlamydophila caviae).